The following is a 307-amino-acid chain: Protoheme IX farnesyltransferase (307 aa).

Helical transmembrane passes span 32–52 (MGIV…ALHF), 65–85 (FFTI…NNYI), 108–128 (PGFA…FLLL), 131–151 (PMAV…YSLW), 158–178 (LNTV…WAAI), 186–206 (IAWM…LALA), 251–271 (LGIT…VLGF), and 287–307 (FVYS…VTFF).

The protein belongs to the UbiA prenyltransferase family. Protoheme IX farnesyltransferase subfamily. Interacts with CtaA.

It is found in the cell membrane. The enzyme catalyses heme b + (2E,6E)-farnesyl diphosphate + H2O = Fe(II)-heme o + diphosphate. It functions in the pathway porphyrin-containing compound metabolism; heme O biosynthesis; heme O from protoheme: step 1/1. Functionally, converts heme B (protoheme IX) to heme O by substitution of the vinyl group on carbon 2 of heme B porphyrin ring with a hydroxyethyl farnesyl side group. The protein is Protoheme IX farnesyltransferase of Bacillus anthracis (strain A0248).